A 522-amino-acid chain; its full sequence is Target of rapamycin complex 2 subunit MAPKAP1 (522 aa).

Position 2 is an N-acetylalanine (Ala2). Residues 2-184 (AFLDNPTIIL…KKIDVYLPLH (183 aa)) are interaction with MAP3K2. Residues 2–267 (AFLDNPTIIL…GFSTLALVEK (266 aa)) form an interaction with NBN region. Thr86 is modified (phosphothreonine). Ser128, Ser186, Ser315, and Ser356 each carry phosphoserine. One can recognise a CRIM domain in the interval 139–267 (QSILSVRLEQ…GFSTLALVEK (129 aa)). Residues 279–353 (LFVRINAAHG…QSAWEFCLVR (75 aa)) form an SIN1-type RBD region. The SIN1-type PH domain occupies 382-487 (HYKSFKVSMI…IVLKVNYILE (106 aa)). Arg393 provides a ligand contact to a 1,2-diacyl-sn-glycero-3-phospho-(1D-myo-inositol-3,4,5-trisphosphate). Thr398 is subject to Phosphothreonine. Lys428 and Lys464 together coordinate a 1,2-diacyl-sn-glycero-3-phospho-(1D-myo-inositol-3,4,5-trisphosphate). Positions 468 to 522 (FESDAATVNEIVLKVNYILESRASTARADYFAQKQRKLNRRTSFSFQKEKKSGQQ) are interaction with ATF2. Ser510 is modified (phosphoserine).

Belongs to the SIN1 family. As to quaternary structure, component of the mechanistic target of rapamycin complex 2 (mTORC2), consisting in two heterotretramers composed of MTOR, MLST8, RICTOR and MAPKAP1/SIN1. The mTORC2 core complex associates with PRR5/PROTOR1 and/or PRR5L/PROTOR2. Contrary to mTORC1, mTORC2 does not bind to and is not sensitive to FKBP12-rapamycin. Interacts with MAP3K2. Interacts with ATF2. Interacts with MAPK8. Interacts with GTP-bound HRAS and KRAS; inhibiting their activity. Interacts with IFNAR2. Interacts with CCDC28B. In terms of assembly, interacts with NBN. In terms of processing, phosphorylation at Ser-128 by PKC promotes relocalization to the perinuclear region, where the mTORC2 complex specifically mediates phosphorylation of SGK1. Phosphorylated at Thr-86 by AKT1 or RPS6KB1 in the presence of growth factors; the effect of this phosphorylation is however unclear. According to two studies, phosphorylation at Thr-86 by AKT1 is part of a positive feedback loop that increases mTORC2 activation. According to another study, phosphorylation at Thr-86 and Thr-398 by RPS6KB1 promotes dissociation from the mTORC2 complex, leading to inhibit mTORC2 signaling. Ubiquitously expressed, with highest levels in heart and skeletal muscle.

The protein resides in the cell membrane. The protein localises to the endoplasmic reticulum membrane. It is found in the early endosome membrane. Its subcellular location is the late endosome membrane. It localises to the lysosome membrane. The protein resides in the golgi apparatus membrane. The protein localises to the mitochondrion outer membrane. It is found in the cytoplasm. Its subcellular location is the perinuclear region. It localises to the nucleus. The protein resides in the cytosol. With respect to regulation, phosphatidylinositol 3,4,5-trisphosphate (PI(3,4,5)P3) promotes MTOR activation by relieving MAPKAP1/SIN1-mediated inhibition of MTOR that takes place in absence of PI(3,4,5)P3. Component of the mechanistic target of rapamycin complex 2 (mTORC2), which transduces signals from growth factors to pathways involved in proliferation, cytoskeletal organization, lipogenesis and anabolic output. In response to growth factors, mTORC2 phosphorylates and activates AGC protein kinase family members, including AKT (AKT1, AKT2 and AKT3), PKC (PRKCA, PRKCB and PRKCE) and SGK1. In contrast to mTORC1, mTORC2 is nutrient-insensitive. Within the mTORC2 complex, MAPKAP1/SIN1 acts as a substrate adapter which recognizes and binds AGC protein kinase family members for phosphorylation by MTOR. mTORC2 plays a critical role in AKT1 activation by mediating phosphorylation of different sites depending on the context, such as 'Thr-450', 'Ser-473', 'Ser-477' or 'Thr-479', facilitating the phosphorylation of the activation loop of AKT1 on 'Thr-308' by PDPK1/PDK1 which is a prerequisite for full activation. mTORC2 catalyzes the phosphorylation of SGK1 at 'Ser-422' and of PRKCA on 'Ser-657'. The mTORC2 complex also phosphorylates various proteins involved in insulin signaling, such as FBXW8 and IGF2BP1. mTORC2 acts upstream of Rho GTPases to regulate the actin cytoskeleton, probably by activating one or more Rho-type guanine nucleotide exchange factors. mTORC2 promotes the serum-induced formation of stress-fibers or F-actin. MAPKAP1 inhibits MAP3K2 by preventing its dimerization and autophosphorylation. Inhibits HRAS and KRAS independently of mTORC2 complex. Enhances osmotic stress-induced phosphorylation of ATF2 and ATF2-mediated transcription. Involved in ciliogenesis, regulates cilia length through its interaction with CCDC28B independently of mTORC2 complex. In terms of biological role, in contrast to isoform 1, isoform 2 and isoform 6, isoform 4 is not a component of the a mTORC2 complex. This is Target of rapamycin complex 2 subunit MAPKAP1 from Homo sapiens (Human).